Here is a 1401-residue protein sequence, read N- to C-terminus: DNA-directed RNA polymerase subunit beta' (1401 aa).

Zn(2+) is bound by residues C70, C72, C85, and C88. The Mg(2+) site is built by D460, D462, and D464. Zn(2+) contacts are provided by C808, C882, C889, and C892.

This sequence belongs to the RNA polymerase beta' chain family. In terms of assembly, the RNAP catalytic core consists of 2 alpha, 1 beta, 1 beta' and 1 omega subunit. When a sigma factor is associated with the core the holoenzyme is formed, which can initiate transcription. Requires Mg(2+) as cofactor. The cofactor is Zn(2+).

The enzyme catalyses RNA(n) + a ribonucleoside 5'-triphosphate = RNA(n+1) + diphosphate. Its function is as follows. DNA-dependent RNA polymerase catalyzes the transcription of DNA into RNA using the four ribonucleoside triphosphates as substrates. This is DNA-directed RNA polymerase subunit beta' from Legionella pneumophila (strain Corby).